Consider the following 771-residue polypeptide: Metal transporter CNNM4 (771 aa).

Residues 1–175 lie on the Extracellular side of the membrane; that stretch reads MAPGGGGGRR…LLFMVEEHGR (175 aa). N-linked (GlcNAc...) asparagine glycosylation is present at N119. In terms of domain architecture, CNNM transmembrane spans 175–355; it reads RFLPLWLHIL…EPYNDLVKEE (181 aa). Residues 176–196 form a helical membrane-spanning segment; that stretch reads FLPLWLHILLVMVLLVLSGIF. Topologically, residues 197–237 are cytoplasmic; that stretch reads SGLNLGLMALDPMELRIVQNCGTEKERKYARKIEPIRRKGN. Residues 238 to 258 constitute an intramembrane region (helical); that stretch reads YLLCSLLLGNVLVNTSLTILL. Over 259–261 the chain is Cytoplasmic; it reads DNL. A helical membrane pass occupies residues 262 to 282; that stretch reads IGSGIMAVASSTIGIVIFGEI. At 283-290 the chain is on the extracellular side; the sequence is LPQALCSR. Residues 291 to 313 form a helical membrane-spanning segment; that stretch reads HGLAVGANTIVLTKVFMLLTFPL. The Cytoplasmic segment spans residues 314-771; that stretch reads SFPISKLLDF…LHRASEEETI (458 aa). 2 consecutive CBS domains span residues 374–435 and 442–508; these read MTQL…CTPL and YNHP…ILDE. Residues S657, S661, and S766 each carry the phosphoserine modification.

Belongs to the ACDP family. As to quaternary structure, interacts with COX11. In terms of tissue distribution, cornea, retina, teeth (at protein level). In the retina it is predominantly localized to the outer plexiform layer, inner plexiform layer and ganglion cell layer. In the tooth strongest expression is observed in the cell body of the ameloblasts. Expressed at high levels in the gastrointestinal tract and testis.

It is found in the cell membrane. In terms of biological role, probable metal transporter. The interaction with the metal ion chaperone COX11 suggests that it may play a role in sensory neuron functions. May play a role in biomineralization and retinal function. This Mus musculus (Mouse) protein is Metal transporter CNNM4 (Cnnm4).